The following is a 96-amino-acid chain: Small ubiquitin-related modifier 2 (96 aa).

Lysine 11 participates in a covalent cross-link: Glycyl lysine isopeptide (Lys-Gly) (interchain with G-Cter in SUMO). The Ubiquitin-like domain occupies 16–96 (DHINLKVAGQ…FQQQTGGHRI (81 aa)). Glycine 93 participates in a covalent cross-link: Glycyl lysine isopeptide (Gly-Lys) (interchain with K-? in acceptor proteins). The propeptide occupies 94–96 (HRI).

This sequence belongs to the ubiquitin family. SUMO subfamily. As to quaternary structure, interacts with sae2 and ube2i. Covalently attached to a number of proteins. Post-translationally, polymeric chains can be formed through Lys-11 cross-linking. In terms of processing, cleavage of precursor form by a sentrin-specific protease is necessary for function.

It localises to the nucleus. Functionally, ubiquitin-like protein that can be covalently attached to proteins as a monomer or as a lysine-linked polymer. Covalent attachment via an isopeptide bond to its substrates requires prior activation by the E1 complex sae1-sae2 and linkage to the E2 enzyme ube2i, and can be promoted by an E3 ligase such as pias1-4. This post-translational modification on lysine residues of proteins plays a crucial role in a number of cellular processes such as nuclear transport, DNA replication and repair, mitosis and signal transduction. Polymeric sumo2 chains are also susceptible to polyubiquitination which functions as a signal for proteasomal degradation of modified proteins. This Danio rerio (Zebrafish) protein is Small ubiquitin-related modifier 2.